We begin with the raw amino-acid sequence, 442 residues long: Cytochrome c biogenesis protein CcsB (442 aa).

The next 3 helical transmembrane spans lie at 17-37 (LRLA…GTVI), 76-96 (TPWY…CTLT), and 162-182 (LGPI…ILGA).

It belongs to the Ccs1/CcsB family. May interact with CcsA.

It localises to the cellular thylakoid membrane. In terms of biological role, required during biogenesis of c-type cytochromes (cytochrome c6 and cytochrome f) at the step of heme attachment. In Thermosynechococcus vestitus (strain NIES-2133 / IAM M-273 / BP-1), this protein is Cytochrome c biogenesis protein CcsB.